Here is a 306-residue protein sequence, read N- to C-terminus: Bifunctional protein FolD 1 (306 aa).

NADP(+)-binding positions include 170–172 (GRG), Thr199, and Val240. Residues 285 to 306 (ARRTRSSRTPVRLPDSGAPAGR) form a disordered region.

This sequence belongs to the tetrahydrofolate dehydrogenase/cyclohydrolase family. In terms of assembly, homodimer.

It catalyses the reaction (6R)-5,10-methylene-5,6,7,8-tetrahydrofolate + NADP(+) = (6R)-5,10-methenyltetrahydrofolate + NADPH. The enzyme catalyses (6R)-5,10-methenyltetrahydrofolate + H2O = (6R)-10-formyltetrahydrofolate + H(+). It functions in the pathway one-carbon metabolism; tetrahydrofolate interconversion. Its function is as follows. Catalyzes the oxidation of 5,10-methylenetetrahydrofolate to 5,10-methenyltetrahydrofolate and then the hydrolysis of 5,10-methenyltetrahydrofolate to 10-formyltetrahydrofolate. The chain is Bifunctional protein FolD 1 from Salinispora tropica (strain ATCC BAA-916 / DSM 44818 / JCM 13857 / NBRC 105044 / CNB-440).